Consider the following 382-residue polypeptide: Mannitol-1-phosphate 5-dehydrogenase (382 aa).

An NAD(+)-binding site is contributed by 3 to 14 (AVHFGAGNIGRG).

The protein belongs to the mannitol dehydrogenase family.

The catalysed reaction is D-mannitol 1-phosphate + NAD(+) = beta-D-fructose 6-phosphate + NADH + H(+). This is Mannitol-1-phosphate 5-dehydrogenase from Exiguobacterium sp. (strain ATCC BAA-1283 / AT1b).